The sequence spans 205 residues: MLSVILKSSIRGLGKAGEVAKVRPGYARYLLADGKAMRATKRNMELLAEKLAVMEEESNQKLREAEKVAEALAGECFVMIRQASDDGKLFGSVAVRDVAKLLGSLGYNVQPKEVFFSEVIKRIGEYEINVELHADLVAVVKLYVVRNEAEAERTRLQVARDRKSRNAAAASEVQDAPVEDGGDEVVSVDSVAAEDGGADASGGTA.

The interval 160–205 (RDRKSRNAAAASEVQDAPVEDGGDEVVSVDSVAAEDGGADASGGTA) is disordered. The span at 184-195 (EVVSVDSVAAED) shows a compositional bias: low complexity.

It belongs to the bacterial ribosomal protein bL9 family.

Its function is as follows. Binds to the 23S rRNA. The polypeptide is Large ribosomal subunit protein bL9 (Anaplasma phagocytophilum (strain HZ)).